A 365-amino-acid polypeptide reads, in one-letter code: MGKKNRKGKENNAAKTSFLKVENIKNTNSGLELPSQDYTNVEEKESSPKTDFPLITKEHVNTKTDSNILDYPTIGDLVSSVEKLCVLKELKIAFPEVDDTLIKAILIASQGVLEPAFNSLLYYSSPEENTDFALPMKPISVEDYSKINVSEILQREIFDDIEDEFSGQGINGSMVISKIESELSSLAEHIGNISTPGSNREVAESTRNVAVAEGHNTILSNEDSILKGKEKGKEEEKEKGEEKGVNSLKGAAVKVVAKSLKNNRIPVTVKRNEPSNNLFDVLNCDESEEEEEQDVETNTSNQERKNQGGNTEVPEAQRDSADRLPAKDDGGYKSAFGTDSCGLFAADAKDEKKQVHPSRQELSFT.

The disordered stretch occupies residues asparagine 28–lysine 49. The CUE domain occupies glutamate 82–serine 125. 2 disordered regions span residues histidine 215–asparagine 246 and glutamate 286–alanine 335. Over residues serine 224–glycine 244 the composition is skewed to basic and acidic residues. A compositionally biased stretch (acidic residues) spans glutamate 286 to valine 295. Residues glutamate 315–glycine 331 are compositionally biased toward basic and acidic residues.

As to quaternary structure, may interact directly with ADY3. Probable component of a spindle pole body (SPB) complex composed of ADY3, SSP1, DON1, MPC54, SPO21/MPC70, NUD1 and CNM67.

It is found in the prospore membrane. Its function is as follows. Involved in the pathway that organizes the prospore membrane (PSM) during sporulation. This is Donuts protein 1 (DON1) from Saccharomyces cerevisiae (strain ATCC 204508 / S288c) (Baker's yeast).